Consider the following 98-residue polypeptide: uncharacterized protein (98 aa).

This is an uncharacterized protein from Archaeoglobus fulgidus (strain ATCC 49558 / DSM 4304 / JCM 9628 / NBRC 100126 / VC-16).